The sequence spans 610 residues: DNA mismatch repair protein MutL (610 aa).

The protein belongs to the DNA mismatch repair MutL/HexB family.

This protein is involved in the repair of mismatches in DNA. It is required for dam-dependent methyl-directed DNA mismatch repair. May act as a 'molecular matchmaker', a protein that promotes the formation of a stable complex between two or more DNA-binding proteins in an ATP-dependent manner without itself being part of a final effector complex. The chain is DNA mismatch repair protein MutL from Rickettsia conorii (strain ATCC VR-613 / Malish 7).